The following is a 101-amino-acid chain: UPF0235 protein MmarC7_0309 (101 aa).

It belongs to the UPF0235 family.

This Methanococcus maripaludis (strain C7 / ATCC BAA-1331) protein is UPF0235 protein MmarC7_0309.